A 376-amino-acid polypeptide reads, in one-letter code: MNLYRDVLRPLIFSGLRADPETVKVGLLRALEWLDATQATGILALLERLFCYRDPRLEVRLWGLTFPNPIGLAAGFDKDGLAVGVWPSLGFGFVEVGTVTPGPQPGNPKPRLFQLPQDRAALNHMGFNNQGAAALAERLRRLRQRPIPIGINLGKGKATPLEEAAADYLASFRLLRELGDYFVVNVSSPNTAGLRSLQAAEQLAPILATLQGENRGQKPLLVKIAPDLDWPEIDAILELAQAYRLAGLVATNTTLRRDNLKTRFLPGLGPLAAAAGGISGAPLRQRSTQVIRYIHQATQGQLPIIGVGGIFTLADAMEKLEAGASLLQVYTGWVYEGPSLVPRLLRGLAAARNPAPSSPERMPTGIQSGRKIVMDP.

FMN is bound by residues A74–K78 and T98. A substrate-binding site is contributed by K78. N123 to F127 serves as a coordination point for substrate. FMN contacts are provided by N152 and N185. N185 is a binding site for substrate. The active-site Nucleophile is S188. N190 is a substrate binding site. The FMN site is built by K223 and T251. N252–T253 provides a ligand contact to substrate. Residues G280, G309, and Y330–T331 each bind FMN. Positions R352–P376 are disordered.

It belongs to the dihydroorotate dehydrogenase family. Type 2 subfamily. In terms of assembly, monomer. Requires FMN as cofactor.

Its subcellular location is the cell membrane. It catalyses the reaction (S)-dihydroorotate + a quinone = orotate + a quinol. It participates in pyrimidine metabolism; UMP biosynthesis via de novo pathway; orotate from (S)-dihydroorotate (quinone route): step 1/1. Its function is as follows. Catalyzes the conversion of dihydroorotate to orotate with quinone as electron acceptor. The polypeptide is Dihydroorotate dehydrogenase (quinone) (Synechococcus sp. (strain JA-3-3Ab) (Cyanobacteria bacterium Yellowstone A-Prime)).